Reading from the N-terminus, the 132-residue chain is Small ribosomal subunit protein uS8 (132 aa).

This sequence belongs to the universal ribosomal protein uS8 family. Part of the 30S ribosomal subunit. Contacts proteins S5 and S12.

Functionally, one of the primary rRNA binding proteins, it binds directly to 16S rRNA central domain where it helps coordinate assembly of the platform of the 30S subunit. In Lactobacillus johnsonii (strain CNCM I-12250 / La1 / NCC 533), this protein is Small ribosomal subunit protein uS8.